A 363-amino-acid chain; its full sequence is Chemerin-like receptor 1 (363 aa).

Residues Met-1–Leu-39 lie on the Extracellular side of the membrane. An N-linked (GlcNAc...) asparagine glycan is attached at Asn-7. Residues Val-40–Ile-60 traverse the membrane as a helical segment. Residues Ala-61 to Thr-71 are Cytoplasmic-facing. Residues Val-72 to Ile-92 traverse the membrane as a helical segment. Residues Ala-93–Lys-109 are Extracellular-facing. The cysteines at positions 108 and 185 are disulfide-linked. Residues Ile-110–Ser-130 form a helical membrane-spanning segment. Topologically, residues Phe-131–Ala-152 are cytoplasmic. The helical transmembrane segment at Tyr-153–Phe-173 threads the bilayer. Residues Arg-174 to Arg-220 are Extracellular-facing. Residue Asn-188 is glycosylated (N-linked (GlcNAc...) asparagine). A helical membrane pass occupies residues Phe-221–Tyr-241. At Lys-242 to Lys-256 the chain is on the cytoplasmic side. A helical membrane pass occupies residues Ile-257–Leu-277. Topologically, residues Leu-278–Arg-283 are extracellular. Residues Ala-284–Asn-304 form a helical membrane-spanning segment. Topologically, residues Ser-305–Leu-363 are cytoplasmic. Ser-335 bears the Phosphoserine mark. A disordered region spans residues Asp-337–Leu-363. Thr-338 carries the phosphothreonine modification. The segment covering His-340–Met-355 has biased composition (polar residues). Phosphoserine occurs at positions 345, 348, and 354.

It belongs to the chemokine-like receptor (CMKLR) family. Predominantly expressed in spleen and temperately in adipose tissue.

It localises to the cell membrane. Receptor for the chemoattractant adipokine chemerin/RARRES2 and for the omega-3 fatty acid derived molecule resolvin E1. Interaction with RARRES2 initiates activation of G proteins G(i)/G(o) and beta-arrestin pathways inducing cellular responses via second messenger pathways such as intracellular calcium mobilization, phosphorylation of MAP kinases MAPK1/MAPK3 (ERK1/2), TYRO3, MAPK14/P38MAPK and PI3K leading to multifunctional effects, like, reduction of immune responses, enhancing of adipogenesis and angionesis. Resolvin E1 down-regulates cytokine production in macrophages by reducing the activation of MAPK1/3 (ERK1/2) and NF-kappa-B. Positively regulates adipogenesis and adipocyte metabolism. This is Chemerin-like receptor 1 (CMLKR1) from Sus scrofa (Pig).